A 253-amino-acid chain; its full sequence is Probable ATP-dependent transporter ycf16 (253 aa).

The ABC transporter domain maps to 6–250; that stretch reads LEVTNLHAAV…EKYGYDWLKN (245 aa). 38–45 contributes to the ATP binding site; that stretch reads GKNGSGKS.

It belongs to the ABC transporter superfamily. Ycf16 family.

Its subcellular location is the plastid. It is found in the chloroplast. The chain is Probable ATP-dependent transporter ycf16 (ycf16) from Guillardia theta (Cryptophyte).